The primary structure comprises 883 residues: DNA mismatch repair protein MutS (883 aa).

Position 633–640 (633–640 (GPNMGGKS)) interacts with ATP.

The protein belongs to the DNA mismatch repair MutS family.

Functionally, this protein is involved in the repair of mismatches in DNA. It is possible that it carries out the mismatch recognition step. This protein has a weak ATPase activity. The chain is DNA mismatch repair protein MutS from Bordetella parapertussis (strain 12822 / ATCC BAA-587 / NCTC 13253).